Here is a 547-residue protein sequence, read N- to C-terminus: Probable hydroxyacid-oxoacid transhydrogenase, mitochondrial (547 aa).

Belongs to the iron-containing alcohol dehydrogenase family. Hydroxyacid-oxoacid transhydrogenase subfamily.

It is found in the mitochondrion. It carries out the reaction (S)-3-hydroxybutanoate + 2-oxoglutarate = (R)-2-hydroxyglutarate + acetoacetate. The catalysed reaction is 4-hydroxybutanoate + 2-oxoglutarate = (R)-2-hydroxyglutarate + succinate semialdehyde. In terms of biological role, catalyzes the cofactor-independent reversible oxidation of gamma-hydroxybutyrate (GHB) to succinic semialdehyde (SSA) coupled to reduction of 2-ketoglutarate (2-KG) to D-2-hydroxyglutarate (D-2-HG). L-3-hydroxybutyrate (L-3-OHB) is also a substrate for HOT when using 2-KG as hydrogen acceptor, resulting in the formation of D-2-HG. This chain is Probable hydroxyacid-oxoacid transhydrogenase, mitochondrial (adhfe1), found in Dictyostelium discoideum (Social amoeba).